A 464-amino-acid chain; its full sequence is UPF0210 protein MA_1691 (464 aa).

Belongs to the UPF0210 family.

The chain is UPF0210 protein MA_1691 from Methanosarcina acetivorans (strain ATCC 35395 / DSM 2834 / JCM 12185 / C2A).